The primary structure comprises 498 residues: Angiopoietin-1 (498 aa).

A signal peptide spans 1–15 (MTVFLSFAFLAAILT). A coiled-coil region spans residues 81-119 (QKLQHLEHVMENYTQWLQKLENYIVENMKSEMAQIQQNA). N-linked (GlcNAc...) asparagine glycans are attached at residues N92, N122, N154, N243, and N295. Residues 153 to 261 (LNQTSRLEIQ…LELMDTVHNL (109 aa)) adopt a coiled-coil conformation. One can recognise a Fibrinogen C-terminal domain in the interval 277-497 (REEEKPFRDC…STTMMIRPLD (221 aa)). 2 cysteine pairs are disulfide-bonded: C286/C315 and C439/C452.

As to quaternary structure, homooligomer. Interacts with TEK/TIE2. Interacts with SVEP1/polydom. Interacts with THBD; this interaction significantly inhibits the generation of activated PC and TAFIa/CPB2 by the thrombin/thrombomodulin complex. In terms of processing, glycosylated.

It localises to the secreted. Its function is as follows. Binds and activates TEK/TIE2 receptor by inducing its dimerization and tyrosine phosphorylation. Plays an important role in the regulation of angiogenesis, endothelial cell survival, proliferation, migration, adhesion and cell spreading, reorganization of the actin cytoskeleton, but also maintenance of vascular quiescence. Required for normal angiogenesis and heart development during embryogenesis. After birth, activates or inhibits angiogenesis, depending on the context. Inhibits angiogenesis and promotes vascular stability in quiescent vessels, where endothelial cells have tight contacts. In quiescent vessels, ANGPT1 oligomers recruit TEK to cell-cell contacts, forming complexes with TEK molecules from adjoining cells, and this leads to preferential activation of phosphatidylinositol 3-kinase and the AKT1 signaling cascades. In migrating endothelial cells that lack cell-cell adhesions, ANGT1 recruits TEK to contacts with the extracellular matrix, leading to the formation of focal adhesion complexes, activation of PTK2/FAK and of the downstream kinases MAPK1/ERK2 and MAPK3/ERK1, and ultimately to the stimulation of sprouting angiogenesis. Mediates blood vessel maturation/stability. Implicated in endothelial developmental processes later and distinct from that of VEGF. Appears to play a crucial role in mediating reciprocal interactions between the endothelium and surrounding matrix and mesenchyme. This Homo sapiens (Human) protein is Angiopoietin-1 (ANGPT1).